We begin with the raw amino-acid sequence, 279 residues long: Acetyl-coenzyme A carboxylase carboxyl transferase subunit beta (279 aa).

The CoA carboxyltransferase N-terminal domain occupies 23-279 (LWWKCEECGA…IVRLAGMLKV (257 aa)). The Zn(2+) site is built by Cys-27, Cys-30, Cys-46, and Cys-49. Residues 27 to 49 (CEECGAMIHKKQLEDHVYTCSDC) form a C4-type zinc finger.

The protein belongs to the AccD/PCCB family. In terms of assembly, acetyl-CoA carboxylase is a heterohexamer composed of biotin carboxyl carrier protein (AccB), biotin carboxylase (AccC) and two subunits each of ACCase subunit alpha (AccA) and ACCase subunit beta (AccD). Requires Zn(2+) as cofactor.

Its subcellular location is the cytoplasm. It carries out the reaction N(6)-carboxybiotinyl-L-lysyl-[protein] + acetyl-CoA = N(6)-biotinyl-L-lysyl-[protein] + malonyl-CoA. Its pathway is lipid metabolism; malonyl-CoA biosynthesis; malonyl-CoA from acetyl-CoA: step 1/1. Its function is as follows. Component of the acetyl coenzyme A carboxylase (ACC) complex. Biotin carboxylase (BC) catalyzes the carboxylation of biotin on its carrier protein (BCCP) and then the CO(2) group is transferred by the transcarboxylase to acetyl-CoA to form malonyl-CoA. The sequence is that of Acetyl-coenzyme A carboxylase carboxyl transferase subunit beta from Chlorobium limicola (strain DSM 245 / NBRC 103803 / 6330).